The chain runs to 205 residues: Large ribosomal subunit protein eL15 (205 aa).

Disordered regions lie at residues G70 to N90 and R172 to N197.

This sequence belongs to the eukaryotic ribosomal protein eL15 family.

This is Large ribosomal subunit protein eL15 (rpl15-1) from Dictyostelium discoideum (Social amoeba).